The primary structure comprises 292 residues: MNIRGTPDLGQPSDDPSSGGERERIRQRMKMVIGQLEDILRELKEVAKELREVVSQIDKLTSDFDFELEPDDWTTATVSSTSSSDKAGVGGPFDLGHLDFMTADILSDSWEFCSFLDISTPSDSVDCPESTRPGAGPDYQLMNGGLPVPNGPRVETPDSSSEEAFSAGPVKGQLPQRTPGTRERVRFSDKVLYHALCCDDEEGDGEEEAAEEEGGLSPEPAHTEAPAGPLKPSPAPYKPRRSPLTGRRSGPTSVPEQTRRVTRNSSTQTVSDKSTQTVLPYTATRQKAKGKN.

Disordered regions lie at residues 1-25, 122-186, and 198-292; these read MNIR…RERI, SDSV…ERVR, and CDDE…KGKN. Residues 23–63 adopt a coiled-coil conformation; it reads ERIRQRMKMVIGQLEDILRELKEVAKELREVVSQIDKLTSD. Residues 198 to 214 show a composition bias toward acidic residues; it reads CDDEEGDGEEEAAEEEG. The span at 263–285 shows a compositional bias: polar residues; the sequence is RNSSTQTVSDKSTQTVLPYTATR.

This sequence belongs to the INSYN1 family. In terms of assembly, interacts with GPHN.

It is found in the postsynaptic density. Component of the protein machinery at the inhibitory synapses, probably acting as a scaffold. Inhibitory synapses dampen neuronal activity through postsynaptic hyperpolarization. This synaptic inhibition is fundamental for the functioning of the central nervous system, shaping and orchestrating the flow of information through neuronal networks to generate a precise neural code. This Bos taurus (Bovine) protein is Inhibitory synaptic factor 1.